Consider the following 250-residue polypeptide: Flagellar L-ring protein (250 aa).

The first 32 residues, methionine 1–glycine 32, serve as a signal peptide directing secretion. Cysteine 33 carries N-palmitoyl cysteine lipidation. Residue cysteine 33 is the site of S-diacylglycerol cysteine attachment.

The protein belongs to the FlgH family. In terms of assembly, the basal body constitutes a major portion of the flagellar organelle and consists of four rings (L,P,S, and M) mounted on a central rod.

It localises to the cell outer membrane. The protein resides in the bacterial flagellum basal body. Functionally, assembles around the rod to form the L-ring and probably protects the motor/basal body from shearing forces during rotation. In Hydrogenovibrio crunogenus (strain DSM 25203 / XCL-2) (Thiomicrospira crunogena), this protein is Flagellar L-ring protein.